Here is a 354-residue protein sequence, read N- to C-terminus: Release factor glutamine methyltransferase (354 aa).

Residues 174-178 (GSGSG), D197, and N241 each bind S-adenosyl-L-methionine. A substrate-binding site is contributed by 241 to 244 (NPPY).

This sequence belongs to the protein N5-glutamine methyltransferase family. PrmC subfamily.

The enzyme catalyses L-glutaminyl-[peptide chain release factor] + S-adenosyl-L-methionine = N(5)-methyl-L-glutaminyl-[peptide chain release factor] + S-adenosyl-L-homocysteine + H(+). In terms of biological role, methylates the class 1 translation termination release factors RF1/PrfA and RF2/PrfB on the glutamine residue of the universally conserved GGQ motif. The protein is Release factor glutamine methyltransferase of Fusobacterium nucleatum subsp. nucleatum (strain ATCC 25586 / DSM 15643 / BCRC 10681 / CIP 101130 / JCM 8532 / KCTC 2640 / LMG 13131 / VPI 4355).